The primary structure comprises 467 residues: Chlorophenol O-methyltransferase (467 aa).

Residues 1–41 are disordered; it reads MAELRAPSSLSTERNGSASNTDVDKQKLNHLYQNGNKKTGS. 2 stretches are compositionally biased toward polar residues: residues 8–21 and 31–41; these read SSLSTERNGSASNT and LYQNGNKKTGS. Asp-320 provides a ligand contact to S-adenosyl-L-methionine. His-368 (proton acceptor) is an active-site residue.

Belongs to the class I-like SAM-binding methyltransferase superfamily. Cation-independent O-methyltransferase family.

It catalyses the reaction 2,4,6-trichlorophenol + S-adenosyl-L-methionine = 2,4,6-trichloroanisole + S-adenosyl-L-homocysteine. With respect to regulation, S-adenosyl-L-homocysteine acts as a competitive inhibitor. Also strongly inhibited by low concentrations of several metal ions, such as Cu(2+), Hg(2+), Zn(2+), and Ag(+), and to a lesser extent by p-chloromercuribenzoic acid, but it is not significantly affected by several thiols or other thiol reagents. Chlorophenol O-methyltransferase that methylates chlorophenols into chloroanisoles which are thought to be responsible for cork taint of wines. The only single chlorophenol (CP) methylated is 2-CP; neither 3-CP nor 4-CP are effective substrates. Within the dichlorophenols (DCPs), 2,4-DCP supports the highest rate of O-methylation, and the activity decreases in the following order: 2,3-DCP, 2,5-DCP, 2,6-DCP, and 3,4-DCP. Within the trichlorophenol (TCP) group, the maximal activity is observed with 2,3,4-TCP, whereas there is increasingly reduced activity with 2,4,5-TCP, 2,4,6-TCP, and 2,3,6-TCP. The only tetrachlorophenol (TeCP) that is methylated is 2,3,4,5-TeCP, since no activity can be detected with 2,3,4,6-TeCP and 2,3,5,6-TeCP. Is also able to methylate other halogenated phenols containing fluoro or bromo substituents, whereas other hydroxylated compounds, such as hydroxylated benzoic acids, hydroxybenzaldehydes, phenol, 2-metoxyphenol, and dihydroxybenzene, were not methylated. In Trichoderma longibrachiatum, this protein is Chlorophenol O-methyltransferase.